We begin with the raw amino-acid sequence, 568 residues long: Vitamin H transporter 1 (568 aa).

A run of 12 helical transmembrane segments spans residues 85 to 105 (IIPC…TVSL), 123 to 143 (GYSA…YIIF), 158 to 178 (IWVS…AVLG), 187 to 207 (YVAL…GLAY), 222 to 242 (IGWY…VSAG), 257 to 277 (WMFL…PWWL), 345 to 365 (VWPF…IFNY), 384 to 404 (LLNA…MPLY), 411 to 431 (FSFF…ANYA), 439 to 459 (GGLL…MAWC), 470 to 490 (VGVA…SVVT), and 508 to 528 (NDVC…EFLL). A disordered region spans residues 547 to 568 (VEDEQEMTDIKPALPSSQQADA).

It belongs to the major facilitator superfamily. Allantoate permease family.

The protein resides in the membrane. In terms of biological role, involved in uptake of biotin and desthiobiotin with the concomitant entry of protons. This Schizosaccharomyces pombe (strain 972 / ATCC 24843) (Fission yeast) protein is Vitamin H transporter 1 (vht1).